We begin with the raw amino-acid sequence, 730 residues long: Wall-associated receptor kinase-like 1 (730 aa).

An N-terminal signal peptide occupies residues 1–25 (MKTKTSIFQFIVASVLTLLINDSSA). Over 26–358 (ATPPPPISNS…KPTKPPVLQG (333 aa)) the chain is Extracellular. N-linked (GlcNAc...) asparagine glycosylation is found at Asn34, Asn40, Asn70, Asn77, Asn92, Asn119, Asn132, Asn211, Asn233, Asn269, and Asn281. The atypical EGF-like stretch occupies residues 282–341 (CSCEYDYFSGMSYRNCYCDYGYTGNPYLRGGCVDTDSCEGNHNCGEDAHCVNMPGPMSMC). Disulfide bonds link Cys284–Cys297, Cys319–Cys331, and Cys325–Cys341. The helical transmembrane segment at 359–379 (ILIGLSGLVFFVGLFWLFKLI) threads the bilayer. Topologically, residues 380-730 (KKRRNINRSK…DQPMAINNKR (351 aa)) are cytoplasmic. One can recognise a Protein kinase domain in the interval 429–702 (FSIDRVLGQG…KEVSNELERI (274 aa)). Residues 435 to 443 (LGQGGQGTV) and Lys457 contribute to the ATP site. Tyr502 carries the post-translational modification Phosphotyrosine. The Proton acceptor role is filled by Asp554. 2 positions are modified to phosphothreonine: Thr588 and Thr593. At Tyr601 the chain carries Phosphotyrosine. The disordered stretch occupies residues 685–730 (KGKNRPNMKEVSNELERIRSSPEDLDVRTENEDEEEDQPMAINNKR). The segment covering 691-714 (NMKEVSNELERIRSSPEDLDVRTE) has biased composition (basic and acidic residues).

This sequence belongs to the protein kinase superfamily. Ser/Thr protein kinase family. As to expression, preferentially expressed in roots and flowers.

It localises to the membrane. It carries out the reaction L-seryl-[protein] + ATP = O-phospho-L-seryl-[protein] + ADP + H(+). The enzyme catalyses L-threonyl-[protein] + ATP = O-phospho-L-threonyl-[protein] + ADP + H(+). Serine/threonine-protein kinase that may function as a signaling receptor of extracellular matrix component. This Arabidopsis thaliana (Mouse-ear cress) protein is Wall-associated receptor kinase-like 1 (WAKL1).